The sequence spans 332 residues: ADP-L-glycero-D-manno-heptose-6-epimerase (332 aa).

Residues Phe-11 to Ile-12, Asp-32 to Asn-33, Lys-39, Lys-54, Glu-76 to Ser-80, and Asn-93 contribute to the NADP(+) site. Catalysis depends on Tyr-140, which acts as the Proton acceptor. Position 144 (Lys-144) interacts with NADP(+). Asn-170 serves as a coordination point for substrate. The NADP(+) site is built by Val-171 and Lys-179. Lys-179 functions as the Proton acceptor in the catalytic mechanism. Residues Arg-181, His-188, Phe-202–Ser-205, Arg-215, and Tyr-294 contribute to the substrate site.

This sequence belongs to the NAD(P)-dependent epimerase/dehydratase family. HldD subfamily. As to quaternary structure, homopentamer. It depends on NADP(+) as a cofactor.

It carries out the reaction ADP-D-glycero-beta-D-manno-heptose = ADP-L-glycero-beta-D-manno-heptose. It functions in the pathway nucleotide-sugar biosynthesis; ADP-L-glycero-beta-D-manno-heptose biosynthesis; ADP-L-glycero-beta-D-manno-heptose from D-glycero-beta-D-manno-heptose 7-phosphate: step 4/4. Catalyzes the interconversion between ADP-D-glycero-beta-D-manno-heptose and ADP-L-glycero-beta-D-manno-heptose via an epimerization at carbon 6 of the heptose. This Dechloromonas aromatica (strain RCB) protein is ADP-L-glycero-D-manno-heptose-6-epimerase.